The sequence spans 1201 residues: DNA-directed RNA polymerase subunit beta' (1201 aa).

Positions 60, 62, 75, and 78 each coordinate Zn(2+). Residues D449, D451, and D453 each coordinate Mg(2+). The Zn(2+) site is built by C818, C892, C899, and C902.

Belongs to the RNA polymerase beta' chain family. As to quaternary structure, the RNAP catalytic core consists of 2 alpha, 1 beta, 1 beta' and 1 omega subunit. When a sigma factor is associated with the core the holoenzyme is formed, which can initiate transcription. Requires Mg(2+) as cofactor. The cofactor is Zn(2+).

It carries out the reaction RNA(n) + a ribonucleoside 5'-triphosphate = RNA(n+1) + diphosphate. DNA-dependent RNA polymerase catalyzes the transcription of DNA into RNA using the four ribonucleoside triphosphates as substrates. The sequence is that of DNA-directed RNA polymerase subunit beta' from Listeria welshimeri serovar 6b (strain ATCC 35897 / DSM 20650 / CCUG 15529 / CIP 8149 / NCTC 11857 / SLCC 5334 / V8).